Reading from the N-terminus, the 211-residue chain is Superoxide dismutase [Mn] (211 aa).

The Mn(2+) site is built by His-27, His-82, Asp-165, and His-169.

It belongs to the iron/manganese superoxide dismutase family. As to quaternary structure, homodimer. Mn(2+) serves as cofactor.

It carries out the reaction 2 superoxide + 2 H(+) = H2O2 + O2. Functionally, destroys superoxide anion radicals which are normally produced within the cells and which are toxic to biological systems. The protein is Superoxide dismutase [Mn] (sodA) of Bordetella pertussis (strain Tohama I / ATCC BAA-589 / NCTC 13251).